A 365-amino-acid polypeptide reads, in one-letter code: MVQKLRRGYTTGTCAAGAAKAAALALWRGEEVQEITLTLPRGEIITLPVTVHKGVEEAEAIIIKDAGDDPDVTHGVAIHVRARKQAGGITLRGGEGIGIVTRPGLAVPVGEPAINPVPRAMIKEAVAAIVPPGLGMELEISIPEGARLARRTLNPRLGIEGGLSILGTTGIVEPMSEEAFRNSLVPQIDVALAAGWETLVLTPGRLGQRQAEEKYGLPATAIILTSNFIGYLLEACVERRVKRVLLWGHGGKLVKVAGGIFYTHSHVADARQEIIAALAAAAGASREIVQQILAATTVEAVQEVIRGSDFEPGFWDSLAARASQRATDLVHGELTVGTALLNLQGDIMGRDEVARQIMGDWGYDR.

This sequence belongs to the CbiD family.

It catalyses the reaction Co-precorrin-5B + S-adenosyl-L-methionine = Co-precorrin-6A + S-adenosyl-L-homocysteine. The protein operates within cofactor biosynthesis; adenosylcobalamin biosynthesis; cob(II)yrinate a,c-diamide from sirohydrochlorin (anaerobic route): step 6/10. Catalyzes the methylation of C-1 in cobalt-precorrin-5B to form cobalt-precorrin-6A. This chain is Cobalt-precorrin-5B C(1)-methyltransferase, found in Moorella thermoacetica (strain ATCC 39073 / JCM 9320).